We begin with the raw amino-acid sequence, 532 residues long: uncharacterized protein (532 aa).

6 helical membrane-spanning segments follow: residues 7–26 (HSSYFSLFLIVALGFMLGRI), 30–52 (GLSLDVSAVIFIALLFGHFGVII), 59–77 (FGLVLFIFTIGIQAGPGFF), 87–109 (LILITMLIICSACLTAVGLKYAF), 116–134 (VVGLIAGALTSTPGLAVAI), and 139–161 (SPLASIAYGIAYPFGVIGVILFV). RCK C-terminal domains lie at 179 to 262 (LEIE…LIGE) and 263 to 346 (REEG…LLGN). Helical transmembrane passes span 356-376 (FFPIAMGIVLGVLFGKLNISF), 386-408 (LTGGVLMVALVLSAVGKTGPIIW), 421-440 (LGLLLFLAEVGTSAGKNLVA), 445-467 (SGLLMFGVGAAITVVPMLVAVIV), 474-496 (INILDLLGTITGGMTSTPGLAAA), and 506-528 (SVAYATVYPIAMVFLILFIQVIS).

The protein belongs to the AAE transporter (TC 2.A.81) family.

The protein localises to the cell membrane. This is an uncharacterized protein from Bacteroides thetaiotaomicron (strain ATCC 29148 / DSM 2079 / JCM 5827 / CCUG 10774 / NCTC 10582 / VPI-5482 / E50).